Reading from the N-terminus, the 571-residue chain is Urease subunit alpha (571 aa).

Positions G132–F571 constitute a Urease domain. The Ni(2+) site is built by H137, H139, and K220. K220 is subject to N6-carboxylysine. H222 contributes to the substrate binding site. Ni(2+) contacts are provided by H249 and H275. H323 acts as the Proton donor in catalysis. D363 contributes to the Ni(2+) binding site.

Belongs to the metallo-dependent hydrolases superfamily. Urease alpha subunit family. As to quaternary structure, heterotrimer of UreA (gamma), UreB (beta) and UreC (alpha) subunits. Three heterotrimers associate to form the active enzyme. Ni cation is required as a cofactor. Post-translationally, carboxylation allows a single lysine to coordinate two nickel ions.

The protein localises to the cytoplasm. It carries out the reaction urea + 2 H2O + H(+) = hydrogencarbonate + 2 NH4(+). It participates in nitrogen metabolism; urea degradation; CO(2) and NH(3) from urea (urease route): step 1/1. This chain is Urease subunit alpha, found in Kocuria rhizophila (strain ATCC 9341 / DSM 348 / NBRC 103217 / DC2201).